The chain runs to 383 residues: Beta-1,3-galactosyltransferase 4 (383 aa).

Topologically, residues 1-8 (MPLSLFRR) are cytoplasmic. Residues 9–29 (LLLAALLLVIIWTLFGPSGIG) traverse the membrane as a helical segment. Topologically, residues 30–383 (EELLSLSLAS…RCRVIAWLHS (354 aa)) are lumenal. A glycan (N-linked (GlcNAc...) asparagine) is linked at asparagine 149.

It belongs to the glycosyltransferase 31 family.

It is found in the golgi apparatus membrane. The catalysed reaction is a ganglioside GM2 (d18:1(4E)) + UDP-alpha-D-galactose = a ganglioside GM1 (d18:1(4E)) + UDP + H(+). The enzyme catalyses a ganglioside GM2 + UDP-alpha-D-galactose = a ganglioside GM1 + UDP + H(+). It carries out the reaction a ganglioside GD2 (d18:1(4E)) + UDP-alpha-D-galactose = a ganglioside GD1b (d18:1(4E)) + UDP + H(+). It catalyses the reaction a ganglioside GA2 (d18:1(4E)) + UDP-alpha-D-galactose = a ganglioside GA1 (d18:1(4E)) + UDP + H(+). It functions in the pathway protein modification; protein glycosylation. Involved in GM1/GD1B/GA1 ganglioside biosynthesis. The sequence is that of Beta-1,3-galactosyltransferase 4 (B3GALT4) from Canis lupus familiaris (Dog).